The following is a 267-amino-acid chain: DNA damage-regulated autophagy modulator protein 2 (267 aa).

6 consecutive transmembrane segments (helical) span residues Leu-8 to Ile-28, Arg-53 to Val-73, Leu-87 to Ser-107, Phe-118 to Val-138, Leu-160 to Leu-180, and Val-203 to Phe-223.

It belongs to the DRAM/TMEM150 family.

The protein resides in the lysosome membrane. Its subcellular location is the photoreceptor inner segment. It is found in the apical cell membrane. Its function is as follows. Plays a role in the initiation of autophagy. In the retina, might be involved in the process of photoreceptor cells renewal and recycling to preserve visual function. Induces apoptotic cell death when coexpressed with DRAM1. The protein is DNA damage-regulated autophagy modulator protein 2 (Dram2) of Rattus norvegicus (Rat).